The primary structure comprises 440 residues: Nuclear fusion protein BIK1 (440 aa).

Residues 26 to 69 (GPVDTKAGMFAGVDLLANIGKNDGSFMGKKYFQTEYPQSGLFIQ) enclose the CAP-Gly domain. A phosphoserine mark is found at Ser95 and Ser110. The disordered stretch occupies residues 108–157 (QFSPMDDPKSPTPMRSFRITSRHSGNQQSMDQEASDHHQQQEFGYDNRED). The segment covering 125–139 (RITSRHSGNQQSMDQ) has biased composition (polar residues). The segment covering 141-157 (ASDHHQQQEFGYDNRED) has biased composition (basic and acidic residues). Residues 190-397 (NSSEVTIELR…AQAQTAVESL (208 aa)) adopt a coiled-coil conformation. Residues 416-429 (CEHCDTMGHNTAEC) carry the CCHC-box motif.

It localises to the cytoplasm. It is found in the cytoskeleton. The protein localises to the microtubule organizing center. Its subcellular location is the spindle pole body. The protein resides in the spindle. Functionally, required for nuclear fusion, chromosome disjunction, and nuclear segregation during mitosis. Probably required for the formation or stabilization of microtubules during mitosis and for spindle pole body fusion during conjugation. The polypeptide is Nuclear fusion protein BIK1 (BIK1) (Saccharomyces cerevisiae (strain ATCC 204508 / S288c) (Baker's yeast)).